A 190-amino-acid chain; its full sequence is Cytoplasmic envelopment protein 3 (190 aa).

Residue glycine 2 is the site of N-myristoyl glycine; by host attachment. A disordered region spans residues 14-190 (GTTSGEPLKD…TKKPAASLPF (177 aa)). A compositionally biased stretch (polar residues) spans 30-43 (SLRSYDNIPPTSSS). Positions 44–58 (DEGEDDDDGEDDDNE) are enriched in acidic residues. The span at 80 to 90 (SHREATHDGPK) shows a compositional bias: basic and acidic residues. Basic residues predominate over residues 108–123 (KQSKKKKKPSKHHHHQ). The segment covering 130 to 139 (ETDDLDEEDT) has biased composition (acidic residues).

Belongs to the herpesviridae cytoplasmic envelopment protein 3 family. Interacts with cytoplasmic envelopment protein 2; this interaction is essential for the proper localization of each protein to the assembly complex and thus for the production of infectious virus. Myristoylation and palmitoylation (probably on one or more of the nearby cysteines at the N-terminus) enable membrane-binding and Golgi apparatus-specific targeting and are essential for efficient packaging. Post-translationally, phosphorylated. Phosphorylation does not seem to be required for recycling to the host Golgi apparatus. Packaging is selective for underphosphorylated forms.

It localises to the virion tegument. The protein resides in the virion membrane. It is found in the host cell membrane. The protein localises to the host Golgi apparatus membrane. Functionally, plays an important role in the cytoplasmic envelopment of tegument proteins and capsids during the assembly and egress processes. Also participates in viral entry at the fusion step probably by regulating the core fusion machinery. This is Cytoplasmic envelopment protein 3 (UL99) from Human cytomegalovirus (strain Merlin) (HHV-5).